Here is a 187-residue protein sequence, read N- to C-terminus: Probable carboxylesterase Culp7 (187 aa).

C15 and C69 are joined by a disulfide. S80 serves as the catalytic Nucleophile. C151 and C158 are disulfide-bonded. D155 is a catalytic residue. Residue H167 is the Proton donor/acceptor of the active site.

This sequence belongs to the cutinase family.

The protein resides in the cytoplasm. It localises to the cell membrane. Its subcellular location is the secreted. It is found in the cell wall. May have a role in cell wall processes. Does not exhibit cutinase activity. The protein is Probable carboxylesterase Culp7 of Mycobacterium tuberculosis (strain ATCC 25618 / H37Rv).